The following is a 344-amino-acid chain: NDP-polyphosphate phosphotransferase 2 (344 aa).

The tract at residues 1–60 (METAKPIAPQKDSKANGVDATDPVVKVASPQDPAGDAKVEDATAPVAEVEPRTPRNRRLP) is disordered.

It belongs to the polyphosphate kinase 2 (PPK2) family. Class I subfamily. The cofactor is Mg(2+).

The enzyme catalyses [phosphate](n) + ATP = [phosphate](n+1) + ADP. It carries out the reaction [phosphate](n) + CTP = [phosphate](n+1) + CDP. The catalysed reaction is [phosphate](n) + GTP = [phosphate](n+1) + GDP. It catalyses the reaction [phosphate](n) + UTP = [phosphate](n+1) + UDP. In terms of biological role, uses inorganic polyphosphate (polyP) as a donor to convert NDP to NTP. PolyP hydrolysis is slightly faster with ADP, but it can also use GDP, CDP and UDP. This is NDP-polyphosphate phosphotransferase 2 from Ruegeria pomeroyi (strain ATCC 700808 / DSM 15171 / DSS-3) (Silicibacter pomeroyi).